Consider the following 352-residue polypeptide: N-acetyl-gamma-glutamyl-phosphate reductase (352 aa).

C155 is an active-site residue.

It belongs to the NAGSA dehydrogenase family. Type 1 subfamily.

It localises to the cytoplasm. It carries out the reaction N-acetyl-L-glutamate 5-semialdehyde + phosphate + NADP(+) = N-acetyl-L-glutamyl 5-phosphate + NADPH + H(+). The protein operates within amino-acid biosynthesis; L-arginine biosynthesis; N(2)-acetyl-L-ornithine from L-glutamate: step 3/4. Functionally, catalyzes the NADPH-dependent reduction of N-acetyl-5-glutamyl phosphate to yield N-acetyl-L-glutamate 5-semialdehyde. The polypeptide is N-acetyl-gamma-glutamyl-phosphate reductase (Cyanothece sp. (strain PCC 7425 / ATCC 29141)).